The sequence spans 121 residues: Small ribosomal subunit protein uS13 (121 aa).

Residues 93-121 (RGLPVRGQNSKNNARTRKGPRRTVANKKK) are disordered. The span at 106–121 (ARTRKGPRRTVANKKK) shows a compositional bias: basic residues.

This sequence belongs to the universal ribosomal protein uS13 family. In terms of assembly, part of the 30S ribosomal subunit. Forms a loose heterodimer with protein S19. Forms two bridges to the 50S subunit in the 70S ribosome.

Located at the top of the head of the 30S subunit, it contacts several helices of the 16S rRNA. In the 70S ribosome it contacts the 23S rRNA (bridge B1a) and protein L5 of the 50S subunit (bridge B1b), connecting the 2 subunits; these bridges are implicated in subunit movement. Contacts the tRNAs in the A and P-sites. This is Small ribosomal subunit protein uS13 from Bacillus subtilis (strain 168).